The chain runs to 127 residues: Putative 2Fe-2S ferredoxin (127 aa).

3 residues coordinate [2Fe-2S] cluster: C23, C54, and C58.

This sequence belongs to the 2Fe2S Shethna-type ferredoxin family. [2Fe-2S] cluster is required as a cofactor.

In terms of biological role, ferredoxins are iron-sulfur proteins that transfer electrons in a wide variety of metabolic reactions. The sequence is that of Putative 2Fe-2S ferredoxin (cbiW) from Priestia megaterium (Bacillus megaterium).